The primary structure comprises 91 residues: MNIALKRINYLINISRVSDNPERCIDLMEKISKRMDITLNHDIKLQYCKVCKMPYRNPVIRLKNGFVLIHCDHCGNTRRIKIRDHSVSSSK.

Residues Cys48, Cys51, Cys71, and Cys74 each contribute to the Zn(2+) site.

It belongs to the eukaryotic/archaeal RNase P protein component 4 family. Consists of a catalytic RNA component and at least 4-5 protein subunits. Requires Zn(2+) as cofactor.

It localises to the cytoplasm. The catalysed reaction is Endonucleolytic cleavage of RNA, removing 5'-extranucleotides from tRNA precursor.. In terms of biological role, part of ribonuclease P, a protein complex that generates mature tRNA molecules by cleaving their 5'-ends. The sequence is that of Ribonuclease P protein component 4 from Picrophilus torridus (strain ATCC 700027 / DSM 9790 / JCM 10055 / NBRC 100828 / KAW 2/3).